Reading from the N-terminus, the 144-residue chain is Peptide methionine sulfoxide reductase MsrB (144 aa).

A MsrB domain is found at Gln-5 to Tyr-128. Cys-117 functions as the Nucleophile in the catalytic mechanism.

This sequence belongs to the MsrB Met sulfoxide reductase family.

It catalyses the reaction L-methionyl-[protein] + [thioredoxin]-disulfide + H2O = L-methionyl-(R)-S-oxide-[protein] + [thioredoxin]-dithiol. The sequence is that of Peptide methionine sulfoxide reductase MsrB from Streptococcus agalactiae serotype Ia (strain ATCC 27591 / A909 / CDC SS700).